A 382-amino-acid chain; its full sequence is S-adenosylmethionine synthase (382 aa).

His15 serves as a coordination point for ATP. Mg(2+) is bound at residue Asp17. Residue Glu43 participates in K(+) binding. Glu56 and Gln99 together coordinate L-methionine. The tract at residues 99-109 (QSPDINQGVDR) is flexible loop. ATP is bound by residues 164-166 (DAK), 230-231 (RF), Asp239, 245-246 (RK), Ala262, and Lys266. Asp239 is a binding site for L-methionine. An L-methionine-binding site is contributed by Lys270.

It belongs to the AdoMet synthase family. In terms of assembly, homotetramer; dimer of dimers. It depends on Mg(2+) as a cofactor. K(+) is required as a cofactor.

Its subcellular location is the cytoplasm. It carries out the reaction L-methionine + ATP + H2O = S-adenosyl-L-methionine + phosphate + diphosphate. It functions in the pathway amino-acid biosynthesis; S-adenosyl-L-methionine biosynthesis; S-adenosyl-L-methionine from L-methionine: step 1/1. In terms of biological role, catalyzes the formation of S-adenosylmethionine (AdoMet) from methionine and ATP. The overall synthetic reaction is composed of two sequential steps, AdoMet formation and the subsequent tripolyphosphate hydrolysis which occurs prior to release of AdoMet from the enzyme. This is S-adenosylmethionine synthase from Glaesserella parasuis serovar 5 (strain SH0165) (Haemophilus parasuis).